A 224-amino-acid polypeptide reads, in one-letter code: Small ribosomal subunit protein uS3 (224 aa).

A KH type-2 domain is found at 39 to 107; that stretch reads IREFLKKKPS…DVWVEIAEVK (69 aa).

Belongs to the universal ribosomal protein uS3 family. As to quaternary structure, part of the 30S ribosomal subunit. Forms a tight complex with proteins S10 and S14.

Its function is as follows. Binds the lower part of the 30S subunit head. Binds mRNA in the 70S ribosome, positioning it for translation. This is Small ribosomal subunit protein uS3 from Chlamydia trachomatis serovar A (strain ATCC VR-571B / DSM 19440 / HAR-13).